Consider the following 573-residue polypeptide: Sulfite reductase [NADPH] hemoprotein beta-component (573 aa).

The [4Fe-4S] cluster site is built by Cys-438, Cys-444, Cys-483, and Cys-487. Siroheme is bound at residue Cys-487.

It belongs to the nitrite and sulfite reductase 4Fe-4S domain family. As to quaternary structure, alpha(8)-beta(8). The alpha component is a flavoprotein, the beta component is a hemoprotein. Siroheme serves as cofactor. It depends on [4Fe-4S] cluster as a cofactor.

It catalyses the reaction hydrogen sulfide + 3 NADP(+) + 3 H2O = sulfite + 3 NADPH + 4 H(+). Its pathway is sulfur metabolism; hydrogen sulfide biosynthesis; hydrogen sulfide from sulfite (NADPH route): step 1/1. Its function is as follows. Component of the sulfite reductase complex that catalyzes the 6-electron reduction of sulfite to sulfide. This is one of several activities required for the biosynthesis of L-cysteine from sulfate. The sequence is that of Sulfite reductase [NADPH] hemoprotein beta-component from Shouchella clausii (strain KSM-K16) (Alkalihalobacillus clausii).